Here is a 557-residue protein sequence, read N- to C-terminus: Arginine--tRNA ligase (557 aa).

Residues 128–138 (ANPTGPLHVGH) carry the 'HIGH' region motif.

It belongs to the class-I aminoacyl-tRNA synthetase family. Monomer.

It localises to the cytoplasm. It carries out the reaction tRNA(Arg) + L-arginine + ATP = L-arginyl-tRNA(Arg) + AMP + diphosphate. This chain is Arginine--tRNA ligase, found in Thiobacillus denitrificans (strain ATCC 25259 / T1).